Consider the following 589-residue polypeptide: Complement component C8 beta chain (589 aa).

The N-terminal stretch at 1-31 (MKTGAQVWRALAKSCLLCAALGCLHLPGARG) is a signal peptide. The propeptide occupies 32 to 53 (EKPDFFETNAVNGSLVRSRPVR). Asn43 is a glycosylation site (N-linked (GlcNAc...) asparagine). Residues 63–116 (DCQLSTWSSWTACDPCQKKRYRHTYLLRPSQFYGELCDFSDKEVEDCVTNRACR) form the TSP type-1 1 domain. Disulfide bonds link Cys64/Cys99, Cys75/Cys109, Cys78/Cys115, Cys121/Cys132, Cys126/Cys145, Cys139/Cys154, and Cys161/Cys199. 2 C-linked (Man) tryptophan glycosylation sites follow: Trp69 and Trp72. The LDL-receptor class A domain occupies 120-155 (RCEGFVCAQTGRCVNRRLLCNGDNDCGDQSDEANCR). Residues Leu137, Asn140, Asp142, Asp144, Asp150, and Glu151 each contribute to the Ca(2+) site. Positions 157-503 (IYKKCSQDME…EFQMEVSSCR (347 aa)) constitute an MACPF domain. N-linked (GlcNAc...) asparagine glycosylation occurs at Asn242. Transmembrane regions (beta stranded) follow at residues 251 to 258 (SSFKFGFK), 261 to 268 (GLVEFGVR), 378 to 385 (AGGGFQIG), and 391 to 398 (VYLKLGVS). A disulfide bridge links Cys377 with Cys402. Position 417 is a phosphothreonine (Thr417). 4 disulfides stabilise this stretch: Cys502-Cys549, Cys504-Cys520, Cys507-Cys522, and Cys524-Cys533. The 31-residue stretch at 504–534 (CAPCRNNGVPILKESRCECICPAGFQGVACE) folds into the EGF-like domain. Positions 544–587 (DGKWSCWSDWSPCSGGRKTRQRQCNNPAPQRGGSPCSGPASETL) constitute a TSP type-1 2 domain. C-linked (Man) tryptophan glycosylation is found at Trp550 and Trp553. Cys556 and Cys589 form a disulfide bridge. Residues 556–589 (CSGGRKTRQRQCNNPAPQRGGSPCSGPASETLDC) form a disordered region.

The protein belongs to the complement C6/C7/C8/C9 family. As to quaternary structure, heterotrimer of 3 chains: alpha (C8A), beta (C8B) and gamma (C8G); the alpha and gamma chains are disulfide bonded. Component of the membrane attack complex (MAC), composed of complement C5b, C6, C7, C8A, C8B, C8G and multiple copies of the pore-forming subunit C9. N-glycosylated; contains one or two bound glycans. Not O-glycosylated.

It localises to the secreted. It is found in the target cell membrane. Membrane attack complex (MAC) assembly is inhibited by CD59, thereby protecting self-cells from damage during complement activation. CD59 acts by binding to the beta-haipins of C8 (C8A and C8B), forming an intermolecular beta-sheet that prevents incorporation of the multiple copies of C9 required for complete formation of the osmolytic pore. MAC assembly is also inhibited by clusterin (CLU) chaperones that inhibit polymerization of C9. Component of the membrane attack complex (MAC), a multiprotein complex activated by the complement cascade, which inserts into a target cell membrane and forms a pore, leading to target cell membrane rupture and cell lysis. The MAC is initiated by proteolytic cleavage of C5 into complement C5b in response to the classical, alternative, lectin and GZMK complement pathways. The complement pathways consist in a cascade of proteins that leads to phagocytosis and breakdown of pathogens and signaling that strengthens the adaptive immune system. C8B, together with C8A and C8G, inserts into the target membrane, but does not form pores by itself. During MAC assembly, associates with C5b, C6 and C7 to form the C5b8 intermediate complex that inserts into the target membrane and traverses the bilayer increasing membrane rigidity. The chain is Complement component C8 beta chain (C8b) from Rattus norvegicus (Rat).